Reading from the N-terminus, the 398-residue chain is DnaJ-like protein R260 (398 aa).

The 66-residue stretch at 7-72 (DLYEILGLTP…EKRRVYDQYG (66 aa)) folds into the J domain. A CR-type zinc finger spans residues 118-202 (KKTVKVTITV…CKGAGINKSE (85 aa)). 4 CXXCXGXG motif repeats span residues 131–138 (CDDCDATG), 147–154 (CKVCRGKG), 173–180 (CHGCQGKK), and 190–197 (CPSCKGAG). A disordered region spans residues 364–398 (LRQINTDPSDESQDRDSEESYGGHGRPEGVGCAQQ). The span at 371 to 382 (PSDESQDRDSEE) shows a compositional bias: acidic residues.

Requires Zn(2+) as cofactor.

The protein is DnaJ-like protein R260 of Acanthamoeba polyphaga mimivirus (APMV).